A 119-amino-acid chain; its full sequence is Large ribosomal subunit protein uL22 (119 aa).

The protein belongs to the universal ribosomal protein uL22 family. In terms of assembly, part of the 50S ribosomal subunit.

In terms of biological role, this protein binds specifically to 23S rRNA; its binding is stimulated by other ribosomal proteins, e.g. L4, L17, and L20. It is important during the early stages of 50S assembly. It makes multiple contacts with different domains of the 23S rRNA in the assembled 50S subunit and ribosome. Its function is as follows. The globular domain of the protein is located near the polypeptide exit tunnel on the outside of the subunit, while an extended beta-hairpin is found that lines the wall of the exit tunnel in the center of the 70S ribosome. The protein is Large ribosomal subunit protein uL22 of Rhodopirellula baltica (strain DSM 10527 / NCIMB 13988 / SH1).